The primary structure comprises 338 residues: tRNA N6-adenosine threonylcarbamoyltransferase (338 aa).

Positions 111 and 115 each coordinate Fe cation. Residues 134–138 (LVSGG), aspartate 167, glycine 180, and asparagine 272 contribute to the substrate site. Aspartate 300 is a binding site for Fe cation.

The protein belongs to the KAE1 / TsaD family. It depends on Fe(2+) as a cofactor.

It localises to the cytoplasm. The catalysed reaction is L-threonylcarbamoyladenylate + adenosine(37) in tRNA = N(6)-L-threonylcarbamoyladenosine(37) in tRNA + AMP + H(+). Functionally, required for the formation of a threonylcarbamoyl group on adenosine at position 37 (t(6)A37) in tRNAs that read codons beginning with adenine. Is involved in the transfer of the threonylcarbamoyl moiety of threonylcarbamoyl-AMP (TC-AMP) to the N6 group of A37, together with TsaE and TsaB. TsaD likely plays a direct catalytic role in this reaction. The polypeptide is tRNA N6-adenosine threonylcarbamoyltransferase (Aliivibrio fischeri (strain MJ11) (Vibrio fischeri)).